The chain runs to 66 residues: Cold shock protein CspB (66 aa).

The region spanning 4 to 63 is the CSD domain; that stretch reads GKVKWFNNEKGYGFIEVEGGSDVFVHFTAIQGEGFKSLEEGQEVSFEIVQGNRGPQAANV.

In terms of assembly, homodimer.

It localises to the cytoplasm. In terms of biological role, affects cell viability at low temperatures. This is Cold shock protein CspB (cspB) from Geobacillus stearothermophilus (Bacillus stearothermophilus).